We begin with the raw amino-acid sequence, 99 residues long: Cell division protein FtsB (99 aa).

Over 1–3 the chain is Cytoplasmic; the sequence is MKF. Residues 4–21 form a helical membrane-spanning segment; it reads FVITLIVLLGLLQYRLWS. Over 22 to 99 the chain is Periplasmic; it reads GDNSLPEYFV…GDRAVSSPSQ (78 aa). The stretch at 31-73 forms a coiled coil; sequence VLQKQIAAQQDGNAKLNERNQVLKEEIIDLKSGTEAIEERARN.

Belongs to the FtsB family. Part of a complex composed of FtsB, FtsL and FtsQ.

It is found in the cell inner membrane. Functionally, essential cell division protein. May link together the upstream cell division proteins, which are predominantly cytoplasmic, with the downstream cell division proteins, which are predominantly periplasmic. The polypeptide is Cell division protein FtsB (Shewanella oneidensis (strain ATCC 700550 / JCM 31522 / CIP 106686 / LMG 19005 / NCIMB 14063 / MR-1)).